The sequence spans 302 residues: Oxygen-dependent coproporphyrinogen-III oxidase (302 aa).

Residue serine 94 participates in substrate binding. A divalent metal cation-binding residues include histidine 98 and histidine 108. The active-site Proton donor is histidine 108. Residue 110-112 participates in substrate binding; that stretch reads NVR. Positions 147 and 177 each coordinate a divalent metal cation. Residues 242-277 are important for dimerization; it reads YVEFNLVWDRGTLFGLQSGGRTESILMSMPPLARWE. Substrate is bound at residue 260–262; it reads GGR.

It belongs to the aerobic coproporphyrinogen-III oxidase family. In terms of assembly, homodimer. It depends on a divalent metal cation as a cofactor.

The protein localises to the cytoplasm. The enzyme catalyses coproporphyrinogen III + O2 + 2 H(+) = protoporphyrinogen IX + 2 CO2 + 2 H2O. Its pathway is porphyrin-containing compound metabolism; protoporphyrin-IX biosynthesis; protoporphyrinogen-IX from coproporphyrinogen-III (O2 route): step 1/1. In terms of biological role, involved in the heme biosynthesis. Catalyzes the aerobic oxidative decarboxylation of propionate groups of rings A and B of coproporphyrinogen-III to yield the vinyl groups in protoporphyrinogen-IX. The polypeptide is Oxygen-dependent coproporphyrinogen-III oxidase (Photorhabdus laumondii subsp. laumondii (strain DSM 15139 / CIP 105565 / TT01) (Photorhabdus luminescens subsp. laumondii)).